Consider the following 258-residue polypeptide: Tryptophan synthase alpha chain (258 aa).

Catalysis depends on proton acceptor residues Glu46 and Asp57.

The protein belongs to the TrpA family. In terms of assembly, tetramer of two alpha and two beta chains.

The enzyme catalyses (1S,2R)-1-C-(indol-3-yl)glycerol 3-phosphate + L-serine = D-glyceraldehyde 3-phosphate + L-tryptophan + H2O. It functions in the pathway amino-acid biosynthesis; L-tryptophan biosynthesis; L-tryptophan from chorismate: step 5/5. Functionally, the alpha subunit is responsible for the aldol cleavage of indoleglycerol phosphate to indole and glyceraldehyde 3-phosphate. The polypeptide is Tryptophan synthase alpha chain (Phocaeicola vulgatus (strain ATCC 8482 / DSM 1447 / JCM 5826 / CCUG 4940 / NBRC 14291 / NCTC 11154) (Bacteroides vulgatus)).